The primary structure comprises 454 residues: Pup--protein ligase (454 aa).

E9 lines the Mg(2+) pocket. R53 lines the ATP pocket. Y55 contributes to the Mg(2+) binding site. Residue D57 is the Proton acceptor of the active site. E63 serves as a coordination point for Mg(2+). Residues T66 and W421 each coordinate ATP.

The protein belongs to the Pup ligase/Pup deamidase family. Pup-conjugating enzyme subfamily.

The catalysed reaction is ATP + [prokaryotic ubiquitin-like protein]-L-glutamate + [protein]-L-lysine = ADP + phosphate + N(6)-([prokaryotic ubiquitin-like protein]-gamma-L-glutamyl)-[protein]-L-lysine.. Its pathway is protein degradation; proteasomal Pup-dependent pathway. It participates in protein modification; protein pupylation. Catalyzes the covalent attachment of the prokaryotic ubiquitin-like protein modifier Pup to the proteasomal substrate proteins, thereby targeting them for proteasomal degradation. This tagging system is termed pupylation. The ligation reaction involves the side-chain carboxylate of the C-terminal glutamate of Pup and the side-chain amino group of a substrate lysine. This Frankia casuarinae (strain DSM 45818 / CECT 9043 / HFP020203 / CcI3) protein is Pup--protein ligase.